The primary structure comprises 105 residues: Large ribosomal subunit protein uL24 (105 aa).

The protein belongs to the universal ribosomal protein uL24 family. As to quaternary structure, part of the 50S ribosomal subunit.

In terms of biological role, one of two assembly initiator proteins, it binds directly to the 5'-end of the 23S rRNA, where it nucleates assembly of the 50S subunit. Its function is as follows. One of the proteins that surrounds the polypeptide exit tunnel on the outside of the subunit. This Vibrio parahaemolyticus serotype O3:K6 (strain RIMD 2210633) protein is Large ribosomal subunit protein uL24.